The following is a 434-amino-acid chain: Enolase A (434 aa).

Residues H160 and E169 each contribute to the substrate site. E212 functions as the Proton donor in the catalytic mechanism. Positions 247, 296, and 321 each coordinate Mg(2+). Substrate-binding residues include E296 and D321. K346 serves as the catalytic Proton acceptor. Substrate is bound by residues 373-376 (SHRS) and K397.

Belongs to the enolase family. As to quaternary structure, homodimer. Mg(2+) serves as cofactor.

It localises to the cytoplasm. It catalyses the reaction (2R)-2-phosphoglycerate = phosphoenolpyruvate + H2O. Its pathway is carbohydrate degradation; glycolysis; pyruvate from D-glyceraldehyde 3-phosphate: step 4/5. This is Enolase A (enoA) from Dictyostelium discoideum (Social amoeba).